The sequence spans 399 residues: Phosphoglycerate kinase (399 aa).

Residues 22–24 (DFN), arginine 38, 61–64 (HLGR), arginine 120, and arginine 153 contribute to the substrate site. ATP-binding positions include lysine 204, glutamate 326, and 352 to 355 (GGDT).

The protein belongs to the phosphoglycerate kinase family. As to quaternary structure, monomer.

It is found in the cytoplasm. It catalyses the reaction (2R)-3-phosphoglycerate + ATP = (2R)-3-phospho-glyceroyl phosphate + ADP. The protein operates within carbohydrate degradation; glycolysis; pyruvate from D-glyceraldehyde 3-phosphate: step 2/5. In Citrifermentans bemidjiense (strain ATCC BAA-1014 / DSM 16622 / JCM 12645 / Bem) (Geobacter bemidjiensis), this protein is Phosphoglycerate kinase.